A 41-amino-acid polypeptide reads, in one-letter code: Photosystem I reaction center subunit VIII (41 aa).

A helical transmembrane segment spans residues Trp-12–Ile-32.

The protein belongs to the PsaI family.

It is found in the cellular thylakoid membrane. In terms of biological role, may help in the organization of the PsaL subunit. This Cyanothece sp. (strain PCC 7425 / ATCC 29141) protein is Photosystem I reaction center subunit VIII.